The chain runs to 305 residues: Translation initiation factor eIF2B subunit alpha (305 aa).

Position 2 is an N-acetylserine (Ser-2). Thr-291 carries the phosphothreonine modification.

This sequence belongs to the eIF-2B alpha/beta/delta subunits family. Component of the translation initiation factor 2B (eIF2B) complex which is a heterodecamer of two sets of five different subunits: alpha, beta, gamma, delta and epsilon. Subunits alpha, beta and delta comprise a regulatory subcomplex and subunits epsilon and gamma comprise a catalytic subcomplex. Within the complex, the hexameric regulatory complex resides at the center, with the two heterodimeric catalytic subcomplexes bound on opposite sides.

It localises to the cytoplasm. Its subcellular location is the cytosol. Its function is as follows. Acts as a component of the translation initiation factor 2B (eIF2B) complex, which catalyzes the exchange of GDP for GTP on the eukaryotic initiation factor 2 (eIF2) complex gamma subunit. Its guanine nucleotide exchange factor activity is repressed when bound to eIF2 complex phosphorylated on the alpha subunit, thereby limiting the amount of methionyl-initiator methionine tRNA available to the ribosome and consequently global translation is repressed. It activates the translation of GCN4 in response to low amino acid, carbon, or purine availability, by suppressing the inhibitory effects of multiple uORFs present in the leader of GCN4 mRNA. It may promote either repression or activation of GCN4 expression depending on amino acid availability. Modulation of GCN3 regulatory function in response to amino acid availability occurs post-translationally. The sequence is that of Translation initiation factor eIF2B subunit alpha from Saccharomyces cerevisiae (strain ATCC 204508 / S288c) (Baker's yeast).